Here is a 169-residue protein sequence, read N- to C-terminus: Myosin regulatory light chain 11 (169 aa).

Ala2 carries the post-translational modification N,N,N-trimethylalanine. Ser15 and Ser16 each carry phosphoserine. A phosphothreonine mark is found at Thr25 and Thr35. The EF-hand 1 domain occupies Thr25–Leu60. Ca(2+) contacts are provided by Asp38, Asn40, Asp42, and Asp49. Ser75 carries the phosphoserine modification. 2 consecutive EF-hand domains span residues Asp95–Arg130 and Phe131–Lys166. A Phosphothreonine modification is found at Thr101.

In terms of assembly, myosin is a hexamer of 2 heavy chains and 4 light chains. As to expression, expressed in fetal and adult skeletal muscle.

Functionally, myosin regulatory subunit that plays an essential role to maintain muscle integrity during early development. Plays a role in muscle contraction. This is Myosin regulatory light chain 11 from Homo sapiens (Human).